We begin with the raw amino-acid sequence, 207 residues long: Urease accessory protein UreG (207 aa).

Glycine 13–threonine 20 contributes to the GTP binding site.

It belongs to the SIMIBI class G3E GTPase family. UreG subfamily. Homodimer. UreD, UreF and UreG form a complex that acts as a GTP-hydrolysis-dependent molecular chaperone, activating the urease apoprotein by helping to assemble the nickel containing metallocenter of UreC. The UreE protein probably delivers the nickel.

It is found in the cytoplasm. Functionally, facilitates the functional incorporation of the urease nickel metallocenter. This process requires GTP hydrolysis, probably effectuated by UreG. The sequence is that of Urease accessory protein UreG from Azoarcus sp. (strain BH72).